A 275-amino-acid polypeptide reads, in one-letter code: Interleukin-2 receptor subunit alpha (275 aa).

An N-terminal signal peptide occupies residues 1 to 21 (MEPSLLMWRFFVFIVVPGCVT). Sushi domains follow at residues 22 to 81 (EACH…FCNS) and 121 to 186 (GHCE…KCIS). Residues 22 to 243 (EACHDDPPSL…DTFIFTTEYQ (222 aa)) lie on the Extracellular side of the membrane. Disulfide bonds link C24–C64, C49–C77, and C51–C79. N80 carries an N-linked (GlcNAc...) asparagine glycan. Residues 86–130 (KNPVKPVTPGSEEQRERKPTDAQSQTQPPEQADLPGHCEEPPPWE) form a disordered region. Residues 121 to 130 (GHCEEPPPWE) are compositionally biased toward basic and acidic residues. 2 disulfides stabilise this stretch: C123-C168 and C152-C184. Residues 188-213 (GANSQAPDEAEPPESTEAPPGSGTFL) form a disordered region. Residues 244–262 (IAVAGCILLLSSILLLSCL) form a helical membrane-spanning segment. At 263-275 (TWQRRWKKNRRTI) the chain is on the cytoplasmic side.

As to quaternary structure, non-covalent dimer of an alpha and a beta subunit. IL2R exists in 3 different forms: a high affinity dimer, an intermediate affinity monomer (beta subunit), and a low affinity monomer (alpha subunit). The high and intermediate affinity forms also associate with a gamma subunit.

It localises to the membrane. In terms of biological role, receptor for interleukin-2. The receptor is involved in the regulation of immune tolerance by controlling regulatory T cells (TREGs) activity. TREGs suppress the activation and expansion of autoreactive T-cells. The polypeptide is Interleukin-2 receptor subunit alpha (IL2RA) (Ovis aries (Sheep)).